The sequence spans 472 residues: FAD-dependent monooxygenase dpmaE (472 aa).

The first 24 residues, Met-1–Leu-24, serve as a signal peptide directing secretion. FAD-binding residues include Glu-35, Gly-49, and Arg-108. N-linked (GlcNAc...) asparagine glycosylation is found at Asn-128 and Asn-179. Asp-305 and Ala-318 together coordinate FAD. Asn-369 carries an N-linked (GlcNAc...) asparagine glycan. Residues Leu-440 to Ile-460 traverse the membrane as a helical segment.

Belongs to the paxM FAD-dependent monooxygenase family. FAD serves as cofactor.

Its subcellular location is the membrane. The protein operates within secondary metabolite biosynthesis; terpenoid biosynthesis. Its function is as follows. FAD-dependent monooxygenase; part of the gene cluster that mediates the biosynthesis of the diterpenoid pyrones subglutinols A and B. The first step of the pathway is the synthesis of the alpha-pyrone moiety by the polyketide synthase dpmaA via condensation of one acetyl-CoA starter unit with 3 malonyl-CoA units and 2 methylations. The alpha-pyrone is then combined with geranylgeranyl pyrophosphate (GGPP) formed by the GGPP synthase dpmaD through the action of the prenyltransferase dpmaC to yield a linear alpha-pyrone diterpenoid. Subsequent steps in the diterpenoid pyrone biosynthetic pathway involve the decalin core formation, which is initiated by the epoxidation of the C10-C11 olefin by the FAD-dependent oxidoreductase dpmaE, and is followed by a cyclization cascade catalyzed by the terpene cyclase dpmaB. The dehydrogenase dpmaF is then involved in tetrahydrofuran (THF) ring formation at the C5 unit to complete the formation of subglutinols A and B. This chain is FAD-dependent monooxygenase dpmaE, found in Metarhizium anisopliae (Entomophthora anisopliae).